Consider the following 1464-residue polypeptide: Neuropathy target esterase sws (1464 aa).

The Lumenal portion of the chain corresponds to 1 to 34 (MDVLELLRASATGCYNTIFSEAWHQYVHKQIAAA). Residues 35–55 (VYWYGALFLLGVLLFVWFLYF) form a helical membrane-spanning segment. The Cytoplasmic portion of the chain corresponds to 56–1464 (KRLARLRLRD…GNTTNNDTKN (1409 aa)). Residue 176–303 (IFGHFEKPIF…IRVIQVIMIR (128 aa)) coordinates a nucleoside 3',5'-cyclic phosphate. Disordered regions lie at residues 329 to 393 (NKNS…LHYH) and 409 to 438 (QQQQSLNSPRRNSTAHVSEAAAASTASSPT). Over residues 338–367 (TGQTTSNVQSQTSQATQSRPSGTTRTPTSP) the composition is skewed to low complexity. Polar residues predominate over residues 409 to 420 (QQQQSLNSPRRN). Residue Ser421 is modified to Phosphoserine. The segment covering 422-438 (TAHVSEAAAASTASSPT) has biased composition (low complexity). Residues 456-586 (ELGL…VVRR) and 575-702 (IVLG…LSHR) contribute to the a nucleoside 3',5'-cyclic phosphate site. Positions 928–1094 (LVLGGGGARG…VNNLPGHLWR (167 aa)) constitute a PNPLA domain. The GXGXXG motif lies at 932-937 (GGGARG). Positions 959–963 (GVSIG) match the GXSXG motif. The Nucleophile role is filled by Ser961. Asp1081 (proton acceptor) is an active-site residue. A DGA/G motif is present at residues 1081 to 1083 (DGG). The residue at position 1175 (Ser1175) is a Phosphoserine. Disordered stretches follow at residues 1352–1374 (VDKATQSTPTLPDKRSVQTPTPS) and 1400–1464 (ATNT…DTKN). A compositionally biased stretch (basic and acidic residues) spans 1429–1444 (KRTEQDEHELEHEQVV). Positions 1450–1464 (MDKQQGNTTNNDTKN) are enriched in polar residues.

Belongs to the NTE family. Interacts with Pka-C3; interaction inhibits the catalytic function of Pka-C3 and the esterase activity of sws.

The protein resides in the endoplasmic reticulum membrane. The enzyme catalyses a 1-acyl-sn-glycero-3-phosphocholine + H2O = sn-glycerol 3-phosphocholine + a fatty acid + H(+). Its function is as follows. Phospholipase B that deacylates intracellular phosphatidylcholine (PtdCho), generating glycerophosphocholine (GroPtdCho). This deacylation occurs at both sn-2 and sn-1 positions of PtdCho. Its specific chemical modification by certain organophosphorus (OP) compounds leads to distal axonopathy. Plays a role in the signaling mechanism between neurons and glia that regulates glia wrapping during development of the adult brain. Essential for membrane lipid homeostasis and cell survival in both neurons and glia of the adult brain. This is Neuropathy target esterase sws from Drosophila grimshawi (Hawaiian fruit fly).